The chain runs to 464 residues: Citrate synthase, mitochondrial (464 aa).

The N-terminal 27 residues, 1–27, are a transit peptide targeting the mitochondrion; that stretch reads MALLTAATRLLGAKNSSCLVLAARHAS. Positions 2-21 match the SIFI-degron motif; that stretch reads ALLTAATRLLGAKNSSCLVL. Position 57 is an N6-succinyllysine (lysine 57). An N6-acetyllysine; alternate modification is found at lysine 76. Lysine 76 is modified (N6-succinyllysine; alternate). An N6-succinyllysine mark is found at lysine 103 and lysine 193. Residue serine 226 is modified to Phosphoserine. The active site involves histidine 301. N6-acetyllysine; alternate is present on residues lysine 321 and lysine 327. Residues lysine 321 and lysine 327 each carry the N6-succinyllysine; alternate modification. Histidine 347 is a catalytic residue. Oxaloacetate is bound at residue arginine 356. Position 375 is an N6-acetyllysine; alternate (lysine 375). At lysine 375 the chain carries N6-succinyllysine; alternate. Position 382 is an N6-acetyllysine (lysine 382). Lysine 393 bears the N6-acetyllysine; alternate mark. N6-succinyllysine; alternate is present on lysine 393. N6,N6,N6-trimethyllysine is present on lysine 395. Aspartate 402 is an active-site residue. Oxaloacetate is bound by residues arginine 428 and arginine 448. An N6-succinyllysine modification is found at lysine 450. Position 459 is an N6-acetyllysine; alternate (lysine 459). Lysine 459 is subject to N6-succinyllysine; alternate.

Belongs to the citrate synthase family. As to quaternary structure, homodimer. In terms of processing, methylated. Trimethylation at Lys-395 by CSKMT decreases citrate synthase activity. Post-translationally, in response to mitochondrial stress, the precursor protein is ubiquitinated by the SIFI complex in the cytoplasm before mitochondrial import, leading to its degradation. Within the SIFI complex, UBR4 initiates ubiquitin chain that are further elongated or branched by KCMF1.

It is found in the mitochondrion matrix. The catalysed reaction is oxaloacetate + acetyl-CoA + H2O = citrate + CoA + H(+). Its pathway is carbohydrate metabolism; tricarboxylic acid cycle; isocitrate from oxaloacetate: step 1/2. Its function is as follows. Key enzyme of the Krebs tricarboxylic acid cycle which catalyzes the synthesis of citrate from acetyl coenzyme A and oxaloacetate. The protein is Citrate synthase, mitochondrial (Cs) of Mus musculus (Mouse).